The chain runs to 261 residues: 2-phytyl-1,4-beta-naphthoquinone methyltransferase, chloroplastic (261 aa).

The N-terminal 30 residues, 1 to 30 (MAALLGIVSPVTFTGKHPVNSRSRRRTVVK), are a transit peptide targeting the chloroplast.

The protein belongs to the class I-like SAM-binding methyltransferase superfamily. MenG/UbiE family.

The protein resides in the plastid. Its subcellular location is the chloroplast. It carries out the reaction demethylphylloquinol + S-adenosyl-L-methionine = phylloquinol + S-adenosyl-L-homocysteine + H(+). Functionally, involved in the biosynthesis of phylloquinone (vitamin K1). Methyltransferase required for the conversion of 2-phytyl-1,4-beta-naphthoquinol to phylloquinol. The sequence is that of 2-phytyl-1,4-beta-naphthoquinone methyltransferase, chloroplastic from Arabidopsis thaliana (Mouse-ear cress).